Here is a 752-residue protein sequence, read N- to C-terminus: Phosphoribosylformylglycinamidine synthase subunit PurL (752 aa).

Histidine 58 is an active-site residue. ATP is bound by residues tyrosine 61 and lysine 103. Glutamate 105 provides a ligand contact to Mg(2+). Substrate-binding positions include 106 to 109 (SHNH) and arginine 128. The Proton acceptor role is filled by histidine 107. Aspartate 129 is a Mg(2+) binding site. Glutamine 253 is a substrate binding site. Aspartate 281 serves as a coordination point for Mg(2+). 325–327 (ESQ) lines the substrate pocket. ATP is bound by residues aspartate 513 and glycine 550. Asparagine 551 contacts Mg(2+). Residue serine 553 participates in substrate binding.

The protein belongs to the FGAMS family. In terms of assembly, monomer. Part of the FGAM synthase complex composed of 1 PurL, 1 PurQ and 2 PurS subunits.

The protein localises to the cytoplasm. It catalyses the reaction N(2)-formyl-N(1)-(5-phospho-beta-D-ribosyl)glycinamide + L-glutamine + ATP + H2O = 2-formamido-N(1)-(5-O-phospho-beta-D-ribosyl)acetamidine + L-glutamate + ADP + phosphate + H(+). It functions in the pathway purine metabolism; IMP biosynthesis via de novo pathway; 5-amino-1-(5-phospho-D-ribosyl)imidazole from N(2)-formyl-N(1)-(5-phospho-D-ribosyl)glycinamide: step 1/2. Part of the phosphoribosylformylglycinamidine synthase complex involved in the purines biosynthetic pathway. Catalyzes the ATP-dependent conversion of formylglycinamide ribonucleotide (FGAR) and glutamine to yield formylglycinamidine ribonucleotide (FGAM) and glutamate. The FGAM synthase complex is composed of three subunits. PurQ produces an ammonia molecule by converting glutamine to glutamate. PurL transfers the ammonia molecule to FGAR to form FGAM in an ATP-dependent manner. PurS interacts with PurQ and PurL and is thought to assist in the transfer of the ammonia molecule from PurQ to PurL. This Streptomyces coelicolor (strain ATCC BAA-471 / A3(2) / M145) protein is Phosphoribosylformylglycinamidine synthase subunit PurL.